Here is a 317-residue protein sequence, read N- to C-terminus: 3',5'-bisphosphate nucleotidase (317 aa).

The Proton acceptor role is filled by Asp46. Positions 69, 118, 120, and 121 each coordinate Mg(2+). Thr123 functions as the Proton acceptor in the catalytic mechanism. Residue Thr123 participates in adenosine 3',5'-bisphosphate binding. 7 residues coordinate AMP: Ser198, His203, Ser227, Lys230, Arg244, Tyr251, and Asp257. Residues His203, Ser227, Lys230, and Arg244 each coordinate adenosine 3',5'-bisphosphate. Asp257 provides a ligand contact to Mg(2+). Asp257 is a binding site for adenosine 3',5'-bisphosphate.

This sequence belongs to the inositol monophosphatase superfamily. Monomer. The cofactor is Mg(2+).

It localises to the cytoplasm. It catalyses the reaction adenosine 3',5'-bisphosphate + H2O = AMP + phosphate. The catalysed reaction is 1D-myo-inositol 1,4-bisphosphate + H2O = 1D-myo-inositol 4-phosphate + phosphate. Its activity is regulated as follows. Inhibited by Li(2+). Functionally, phosphatase that converts 3'-phosphoadenosine 5'-phosphate (PAP) to AMP. Is also able to hydrolyze inositol 1,4-bisphosphate but with less efficiency. The protein is 3',5'-bisphosphate nucleotidase of Entamoeba histolytica (strain ATCC 30459 / HM-1:IMSS / ABRM).